Reading from the N-terminus, the 862-residue chain is Ecdysone-induced protein 78C (862 aa).

Disordered regions lie at residues 28–83 (SSEQ…EEAL), 97–138 (LHFF…KQHH), 173–210 (ASLS…LNCT), and 230–353 (ASNH…NNNN). The span at 37–46 (KQEDLIKDFT) shows a compositional bias: basic and acidic residues. Residues 47 to 82 (RDEEEQPSEEEAEEEDNEEDEEEEGEEEEEDEDEEA) are compositionally biased toward acidic residues. Residues 105–119 (DSSTQGAYSEANSLE) show a composition bias toward polar residues. Low complexity-rich tracts occupy residues 173–206 (ASLS…QQHQ), 230–291 (ASNH…NNSV), 308–335 (QQQQ…QQQQ), and 342–353 (SSSSNGSSNNNN). The segment at residues 360–435 (FVPCKVCGDK…AGMSRDSVRY (76 aa)) is a DNA-binding region (nuclear receptor). 2 NR C4-type zinc fingers span residues 363–383 (CKVC…CEGC) and 399–418 (CLRD…CQYC). The disordered stretch occupies residues 444–557 (ELNGAAASSA…NNNSSSGNAS (114 aa)). Residues 447–460 (GAAASSAAAGAPAS) show a composition bias toward low complexity. Residues 463–472 (VDDSTSSTLH) are compositionally biased toward polar residues. Positions 475-508 (HLQQQQQQHLLQQQQQQQHQPQLQQHHQLQQQPH) are enriched in low complexity. The segment covering 516–533 (TPSTPQTPQMCSIASSPS) has biased composition (polar residues). Over residues 539-555 (NSANNNNNNNNNSSSGN) the composition is skewed to low complexity. In terms of domain architecture, NR LBD spans 626-855 (YTEELTRELM…PPLFAEIFDI (230 aa)).

This sequence belongs to the nuclear hormone receptor family. NR1 subfamily.

The protein resides in the nucleus. Induces the early late puff 78C which triggers puparium formation and development. In Drosophila melanogaster (Fruit fly), this protein is Ecdysone-induced protein 78C (Eip78C).